A 4451-amino-acid chain; its full sequence is Gramicidin S synthase 2 (4451 aa).

The interval 467–1044 is domain 1 (proline-activating); it reads DKTIHQLFTE…IQEISNYING (578 aa). Carrier domains are found at residues 971 to 1046, 2006 to 2081, 3052 to 3127, and 4090 to 4165; these read VPTN…NGAK, APSS…ADGQ, RPRT…EETD, and APRN…THQE. O-(pantetheine 4'-phosphoryl)serine occurs at positions 1006, 2041, 3087, and 4125. A domain 2 (valine-activating) region spans residues 1521-2080; the sequence is DHVAVGWKDQ…SALAQYIADG (560 aa). The interval 2538–3135 is domain 3 (ornithine-activating); the sequence is YATNKIFHEL…TDTEQYMAIQ (598 aa). Residues 3591 to 4173 form a domain 4 (leucine-activating) region; that stretch reads IQELFEEQVK…QESENNVHQP (583 aa).

Belongs to the ATP-dependent AMP-binding enzyme family. In terms of assembly, large multienzyme complex of GrsA and GrsB. It depends on pantetheine 4'-phosphate as a cofactor.

It functions in the pathway antibiotic biosynthesis; gramicidin S biosynthesis. This protein is a multifunctional enzyme, able to activate and polymerize the amino acids Pro, Val, Orn and Leu. Activation sites for these AA consist of individual domains. In Aneurinibacillus migulanus (Bacillus migulanus), this protein is Gramicidin S synthase 2 (grsB).